The sequence spans 369 residues: 1-aminocyclopropane-1-carboxylate oxidase homolog 2 (369 aa).

The Fe2OG dioxygenase domain maps to 217-318 (KGLRMLCHYF…VSVACFFHTH (102 aa)). Positions 241, 243, and 297 each coordinate Fe cation.

Belongs to the iron/ascorbate-dependent oxidoreductase family. Fe cation is required as a cofactor.

This is 1-aminocyclopropane-1-carboxylate oxidase homolog 2 from Arabidopsis thaliana (Mouse-ear cress).